The primary structure comprises 666 residues: Protein-arginine deiminase type-4 (666 aa).

The Ca(2+) site is built by asparagine 153, aspartate 155, aspartate 165, aspartate 168, aspartate 176, and aspartate 179. Arginine 212 and arginine 218 each carry citrulline. Residue glutamine 349 coordinates Ca(2+). Residue aspartate 350 is part of the active site. Ca(2+) is bound by residues glutamate 351, glutamate 353, aspartate 369, and serine 370. Citrulline is present on residues arginine 372, arginine 374, and arginine 383. Substrate is bound at residue arginine 374. Phenylalanine 407, leucine 410, and glutamate 411 together coordinate Ca(2+). Catalysis depends on residues histidine 471, aspartate 473, and cysteine 648.

It belongs to the protein arginine deiminase family. Ca(2+) is required as a cofactor. Autocitrullination at Arg-372 and Arg-374 inactivates the enzyme. Expressed in pluripotent embryonic stem and induced pluripotent stem cells but not multipotent neural stem cells.

It localises to the cytoplasm. The protein resides in the nucleus. The protein localises to the cytoplasmic granule. It catalyses the reaction L-arginyl-[protein] + H2O = L-citrullyl-[protein] + NH4(+). With respect to regulation, strongly Inhibited by F-amidine and N-alpha-benzoyl-N5-(2-chloro-1-iminoethyl)-L-ornithine amide (Cl-amidine). These inhibitors are however not specific to PADI4 and also inhibit other members of the family. Functionally, catalyzes the citrullination/deimination of arginine residues of proteins such as histones, thereby playing a key role in histone code and regulation of stem cell maintenance. Citrullinates histone H1 at 'Arg-54' (to form H1R54ci), histone H3 at 'Arg-2', 'Arg-8', 'Arg-17' and/or 'Arg-26' (to form H3R2ci, H3R8ci, H3R17ci, H3R26ci, respectively) and histone H4 at 'Arg-3' (to form H4R3ci). Acts as a key regulator of stem cell maintenance by mediating citrullination of histone H1: citrullination of 'Arg-54' of histone H1 (H1R54ci) results in H1 displacement from chromatin and global chromatin decondensation, thereby promoting pluripotency and stem cell maintenance. Promotes profound chromatin decondensation during the innate immune response to infection in neutrophils by mediating formation of H1R54ci. Required for the formation of neutrophil extracellular traps (NETs); NETs are mainly composed of DNA fibers and are released by neutrophils to bind pathogens during inflammation. Citrullination of histone H3 prevents their methylation by CARM1 and HRMT1L2/PRMT1 and represses transcription. Citrullinates EP300/P300 at 'Arg-2142', which favors its interaction with NCOA2/GRIP1. The chain is Protein-arginine deiminase type-4 (Padi4) from Mus musculus (Mouse).